The primary structure comprises 168 residues: MPRSRINGNFIDKTFSIVANILLRIIPTTSGEKEAFTYYRDGISAQSEGNYAEALQNYYEAMRLEIDPYDRSYILYNIGLIHTSNGEHTKALEYYFRALERNSFLPQAFNNMAVICHYRGEQAIRQGDSEIAEAWFDQAAEYWKQAIALTPGNYIEAHNWLKITRRFE.

TPR repeat units lie at residues 35–68, 72–105, and 120–153; these read AFTY…EIDP, SYIL…NSFL, and GEQA…TPGN.

Belongs to the Ycf3 family.

The protein localises to the plastid. The protein resides in the chloroplast thylakoid membrane. Essential for the assembly of the photosystem I (PSI) complex. May act as a chaperone-like factor to guide the assembly of the PSI subunits. This Jasminum nudiflorum (Winter jasmine) protein is Photosystem I assembly protein Ycf3.